Here is a 527-residue protein sequence, read N- to C-terminus: MADSRDPASDQMKHWKEQRAAQKADVLTTGAGNPVGDKLNVITVGPRGPLLVQDVVFTDEMAHFDRERIPERVVHAKGAGAFGYFEVTHDITKYSKAKVFEHIGKKTPIAVRFSTVAGESGSADTVRDPRGFAVKFYTEDGNWDLVGNNTPIFFIRDPLLFPSFIHSQKRNPQTHLKDPDMVWDFWSLRPESLHQVSFLFSDRGIPDGHRHMNGYGSHTFKLVNANGEAVYCKFHYKTDQGIKNLSVEDAARLSQEDPDYGIRDLFNAIATEKYPSWTFYIQVMTFNQAETFPFNPFDLTKVWPHKDYPLIPVGKLVLNRNPVNYFAEVEQIAFDPSNMPPGIEASPDKMLQGRLFAYPDTHRHRLGPNYLHIPVNCPYRARVANYQRDGPMCMQDNQGGAPNYYPNSFGAPEQQPSALEHSTQCSGEVQRFNTASDDNVTQVRAFYVNVLNEEQRKRLCENIAGHLKDAQIFIQKKAVKNFTEVHPDYGSRIQALLDKYNAEKPKNAIHTFVQSGSHLAAREKANL.

A2 bears the N-acetylalanine mark. S9 carries the phosphoserine modification. K13 bears the N6-succinyllysine mark. Catalysis depends on residues H75 and N148. Residues H194, S201, R203, and N213 each contribute to the NADP(+) site. N6-succinyllysine is present on K221. K233 carries the N6-acetyllysine modification. The NADP(+) site is built by K237, W303, H305, and K306. The residue at position 306 (K306) is an N6-acetyllysine; alternate. K306 carries the post-translational modification N6-succinyllysine; alternate. Y358 serves as a coordination point for heme. Residues S417 and S422 each carry the phosphoserine modification. K480 carries the N6-acetyllysine; alternate modification. K480 carries the post-translational modification N6-succinyllysine; alternate. K499 is subject to N6-acetyllysine. A Phosphothreonine modification is found at T511. 2 positions are modified to phosphoserine: S515 and S517. Residues 524–527 (KANL) carry the Microbody targeting signal; atypical motif.

It belongs to the catalase family. Homotetramer. Interacts (via microbody targeting signal) with PEX5, monomeric form interacts with PEX5, leading to its translocation into peroxisomes. It depends on heme as a cofactor. The cofactor is NADP(+).

It is found in the peroxisome matrix. It catalyses the reaction 2 H2O2 = O2 + 2 H2O. In terms of biological role, catalyzes the degradation of hydrogen peroxide (H(2)O(2)) generated by peroxisomal oxidases to water and oxygen, thereby protecting cells from the toxic effects of hydrogen peroxide. Promotes growth of cells including T-cells, B-cells, myeloid leukemia cells, melanoma cells, mastocytoma cells and normal and transformed fibroblast cells. The polypeptide is Catalase (CAT) (Pongo abelii (Sumatran orangutan)).